The primary structure comprises 469 residues: Protein HEAT STRESS TOLERANT DWD 1 (469 aa).

Positions 1 to 15 (MGRNVKTKAKRKNKK) are enriched in basic residues. Disordered stretches follow at residues 1 to 29 (MGRN…SIPT) and 115 to 150 (DVVP…KTPN). A compositionally biased stretch (acidic residues) spans 124–143 (GEDEDEDDEDDSDSDDDDGD). WD repeat units follow at residues 157 to 197 (AHHG…NALA), 221 to 261 (GHKD…WAVD), 267 to 307 (GHTA…SPAL), 311 to 351 (AHNA…GGDA), 358 to 398 (YHKH…DEEE), and 425 to 464 (QGQK…NTLP).

The protein belongs to the WD repeat RBAP46/RBAP48/MSI1 family. In terms of assembly, probable component of CULLIN4 (CUL4) RING ligase (CRL4) complexes. Interacts with DDB1A and DDB1B. Associates with HSP90-1.

The protein operates within protein modification; protein ubiquitination. Probable substrate receptor of CRL4 E3 ligase complexes acting as negative regulators of thermotolerance by disturbing the action of HSP90-1 and by preventing the expression of heat-inducible genes (e.g. HSP14.7, HSP21, At2g03020 and WRKY28). In Arabidopsis thaliana (Mouse-ear cress), this protein is Protein HEAT STRESS TOLERANT DWD 1.